The sequence spans 186 residues: Holliday junction branch migration complex subunit RuvA (186 aa).

Positions 1 to 61 (MYSYIKGKVV…ENLQILYGFN (61 aa)) are domain I. The domain II stretch occupies residues 62–134 (DNKNLLFFKK…LKGDLIFSEK (73 aa)). A flexible linker region spans residues 134–135 (KI). Positions 136–186 (ILNPKKTELEKILLNLGFVKKEIKSVLNQIDDKKELELMLKEVLLKLAKNI) are domain III.

The protein belongs to the RuvA family. In terms of assembly, homotetramer. Forms an RuvA(8)-RuvB(12)-Holliday junction (HJ) complex. HJ DNA is sandwiched between 2 RuvA tetramers; dsDNA enters through RuvA and exits via RuvB. An RuvB hexamer assembles on each DNA strand where it exits the tetramer. Each RuvB hexamer is contacted by two RuvA subunits (via domain III) on 2 adjacent RuvB subunits; this complex drives branch migration. In the full resolvosome a probable DNA-RuvA(4)-RuvB(12)-RuvC(2) complex forms which resolves the HJ.

Its subcellular location is the cytoplasm. Its function is as follows. The RuvA-RuvB-RuvC complex processes Holliday junction (HJ) DNA during genetic recombination and DNA repair, while the RuvA-RuvB complex plays an important role in the rescue of blocked DNA replication forks via replication fork reversal (RFR). RuvA specifically binds to HJ cruciform DNA, conferring on it an open structure. The RuvB hexamer acts as an ATP-dependent pump, pulling dsDNA into and through the RuvAB complex. HJ branch migration allows RuvC to scan DNA until it finds its consensus sequence, where it cleaves and resolves the cruciform DNA. The polypeptide is Holliday junction branch migration complex subunit RuvA (Phytoplasma mali (strain AT)).